The primary structure comprises 218 residues: Cell division protein SepF (218 aa).

Residues 25–115 (DVAASTDNVI…IANRREQYQQ (91 aa)) form a disordered region. Positions 29–43 (STDNVIPRSQQSVRA) are enriched in polar residues. The segment covering 47–63 (PKQEPRNNHVQQDHQAR) has biased composition (basic and acidic residues).

It belongs to the SepF family. In terms of assembly, homodimer. Interacts with FtsZ.

The protein localises to the cytoplasm. Its function is as follows. Cell division protein that is part of the divisome complex and is recruited early to the Z-ring. Probably stimulates Z-ring formation, perhaps through the cross-linking of FtsZ protofilaments. Its function overlaps with FtsA. The protein is Cell division protein SepF of Streptococcus pyogenes serotype M12 (strain MGAS2096).